The primary structure comprises 387 residues: Beta-alanyl-dopamine/carcinine hydrolase (387 aa).

Belongs to the peptidase C45 family. The unprocessed protein forms homodimers. May form heterodimers composed of a 15 kDa alpha subunit and a 30 kDa beta subunit. In terms of processing, the protein is synthesized as a 43 kDa precursor which is then self-processed into a 15 kDa alpha subunit and a 30 kDa beta subunit. Processing appears to be necessary for beta-alanyl-dopamine/carcinine hydrolase activity. The beta subunit carries the beta-alanyl-dopamine/carcinine hydrolase activity. In terms of tissue distribution, expressed in body, head, optic lobes and retina (at protein level). Expressed in photoreceptor cells R1-R6 in the lamina and in photoreceptor cells R7 and R8 in the medulla (at protein level).

It is found in the cell projection. It localises to the axon. The protein resides in the cytoplasm. It carries out the reaction carcinine + H2O = histamine + beta-alanine. It catalyses the reaction beta-alanyl-dopamine + H2O = dopamine + beta-alanine. In the cuticle, catalyzes the hydrolysis of beta-alanyl-dopamine releasing dopamine and beta-alanine; dopamine is a metabolite involved in the pigmentation and sclerotization of the insect cuticle. In the photoreceptor cells, catalyzes the hydrolysis of carcinine releasing histamine and beta-alanine contributing to the recycling of the neurotransmitter histamine in the optical nerve system. Also, regulates the cuticular hydrocarbon composition in females. This is Beta-alanyl-dopamine/carcinine hydrolase from Drosophila melanogaster (Fruit fly).